Consider the following 255-residue polypeptide: tRNA (guanine-N(1)-)-methyltransferase (255 aa).

S-adenosyl-L-methionine-binding positions include glycine 117 and 137–142; that span reads LGDFVL.

This sequence belongs to the RNA methyltransferase TrmD family. Homodimer.

Its subcellular location is the cytoplasm. It catalyses the reaction guanosine(37) in tRNA + S-adenosyl-L-methionine = N(1)-methylguanosine(37) in tRNA + S-adenosyl-L-homocysteine + H(+). Specifically methylates guanosine-37 in various tRNAs. The chain is tRNA (guanine-N(1)-)-methyltransferase from Paraburkholderia phytofirmans (strain DSM 17436 / LMG 22146 / PsJN) (Burkholderia phytofirmans).